The primary structure comprises 949 residues: ATPase 5, plasma membrane-type (949 aa).

Serine 2 carries the N-acetylserine modification. At 2–61 (SELDHIKNESVDLVRIPMEEVFEELKCTKQGLTANEASHRLDVFGPNKLEEKKESKLLKF) the chain is on the cytoplasmic side. The helical transmembrane segment at 62-81 (LGFMWNPLSWVMEVAALMAI) threads the bilayer. Over 82 to 93 (ALANGGGRPPDW) the chain is Extracellular. Residues 94–114 (QDFVGIVCLLLINSTISFIEE) traverse the membrane as a helical segment. Residues 115 to 243 (NNAGNAAAAL…GHFQKVLTSI (129 aa)) are Cytoplasmic-facing. The chain crosses the membrane as a helical span at residues 244 to 264 (GNFCICSIALGIIVELLVMYP). The Extracellular portion of the chain corresponds to 265 to 273 (IQRRRYRDG). The chain crosses the membrane as a helical span at residues 274–291 (IDNLLVLLIGGIPIAMPS). The Cytoplasmic segment spans residues 292 to 643 (VLSVTMATGS…TSRAIFQRMK (352 aa)). Aspartate 329 (4-aspartylphosphate intermediate) is an active-site residue. Mg(2+)-binding residues include aspartate 588 and aspartate 592. The chain crosses the membrane as a helical span at residues 644–665 (NYTIYAVSITIRIVFGFMFIAL). The Extracellular segment spans residues 666 to 670 (IWQFD). A helical membrane pass occupies residues 671–693 (FSPFMVLIIAILNDGTIMTISKD). The Cytoplasmic segment spans residues 694–709 (RMKPSPQPDSWKLRDI). A helical membrane pass occupies residues 710–730 (FSTGVVLGGYQALMTVVFFWV). Residues 731–751 (MKDSDFFSNYFGVRPLSQRPE) lie on the Extracellular side of the membrane. Residues 752–772 (QMMAALYLQVSIISQALIFVT) form a helical membrane-spanning segment. Residues 773–784 (RSRSWSYAECPG) are Cytoplasmic-facing. The helical transmembrane segment at 785–805 (LLLLGAFVIAQLVATFIAVYA) threads the bilayer. Over 806-813 (NWSFARIE) the chain is Extracellular. Residues 814–834 (GAGWGWAGVIWLYSFLTYIPL) form a helical membrane-spanning segment. Over 835 to 949 (DLLKFGIRYV…IDTIQQHYTV (115 aa)) the chain is Cytoplasmic. The residue at position 881 (threonine 881) is a Phosphothreonine. A phosphoserine mark is found at serine 899 and serine 931. Positions 947 to 949 (YTV) are interaction with 14-3-3 proteins. Threonine 948 carries the phosphothreonine modification.

This sequence belongs to the cation transport ATPase (P-type) (TC 3.A.3) family. Type IIIA subfamily. As to quaternary structure, binds to 14-3-3 proteins. The binding is induced by phosphorylation of Thr-948. Binding to 14-3-3 proteins activates the H(+)-ATPase. As to expression, expressed in guard cells and leaves.

Its subcellular location is the membrane. It catalyses the reaction ATP + H2O + H(+)(in) = ADP + phosphate + 2 H(+)(out). In terms of biological role, the plasma membrane H(+) ATPase of plants and fungi generates a proton gradient that drives the active transport of nutrients by H(+)-symport. The resulting external acidification and/or internal alkinization may mediate growth responses. This is ATPase 5, plasma membrane-type (AHA5) from Arabidopsis thaliana (Mouse-ear cress).